Reading from the N-terminus, the 87-residue chain is Protein L (87 aa).

Its function is as follows. This protein inhibits the multiplication of double-stranded DNA phages, such as P1 and lambda. This is Protein L (L) from Escherichia coli.